Reading from the N-terminus, the 311-residue chain is CAAX prenyl protease 2 (311 aa).

A run of 3 helical transmembrane segments spans residues 14–34 (VATC…PTVI), 51–71 (FICA…ILPI), and 94–114 (VVYP…LKLF). Catalysis depends on glutamate 164, which acts as the Proton donor/acceptor. A helical transmembrane segment spans residues 173–193 (IPLLLCAGFRINTAIFLCPVL). The active-site Proton donor/acceptor is histidine 198. A run of 3 helical transmembrane segments spans residues 219-239 (IVGL…FLFI), 244-264 (LAAP…VLYA), and 268-288 (GLVS…LFPL).

The protein belongs to the peptidase U48 family. In terms of tissue distribution, expressed in seeds, stems, leaves, flowers and siliques.

The protein resides in the endoplasmic reticulum membrane. The enzyme catalyses Hydrolyzes the peptide bond -P2-(S-farnesyl or geranylgeranyl)C-P1'-P2'-P3'-COOH where P1' and P2' are amino acids with aliphatic sidechains and P3' is any C-terminal residue.. Its activity is regulated as follows. Inhibited in vitro by L-1-tosylamido-2-phenylethyl chloromethyl ketone (TPCK) and N-ethylmaleimide, but not by EDTA. Its function is as follows. Protease involved in the processing of a variety of prenylated proteins containing the C-terminal CAAX motif, where C is a cysteine modified with an isoprenoid lipid, A is an aliphatic amino acid and X is any C-terminal amino acid. Proteolytically removes the C-terminal three residues of farnesylated and geranylated proteins, leaving the prenylated cysteine as the new C-terminus. The substrate specificity is only partially overlapping with that of FACE1. CAAX processing is likely required for subcellular targeting of prenylated proteins to the plasma membrane. The chain is CAAX prenyl protease 2 (FACE2) from Arabidopsis thaliana (Mouse-ear cress).